A 425-amino-acid chain; its full sequence is Putative E3 ubiquitin-protein ligase UBR7 (425 aa).

The UBR-type zinc finger occupies 44–116; the sequence is EKCSYSQGSV…KNLECKLFPD (73 aa). Residues 132–188 form a PHD-type; atypical zinc finger; the sequence is GLYCVCKRPYPDPEDEVPDEMIQCVVCEDWFHGRHLGAIPPESGDFQEMVCQACMRR. Residues 212–269 form a disordered region; that stretch reads LPNATGMGDEDVSKPENGAPQDNGLKEDAPEHGRDSVNEVKAEQKNEPCSSSSSESDL. Glycyl lysine isopeptide (Lys-Gly) (interchain with G-Cter in SUMO2) cross-links involve residues Lys225 and Lys252. Basic and acidic residues predominate over residues 235–257; it reads GLKEDAPEHGRDSVNEVKAEQKN. The residue at position 264 (Ser264) is a Phosphoserine. Glycyl lysine isopeptide (Lys-Gly) (interchain with G-Cter in SUMO2) cross-links involve residues Lys274 and Lys398.

Expressed in testis and sperm (at protein level).

It carries out the reaction S-ubiquitinyl-[E2 ubiquitin-conjugating enzyme]-L-cysteine + [acceptor protein]-L-lysine = [E2 ubiquitin-conjugating enzyme]-L-cysteine + N(6)-ubiquitinyl-[acceptor protein]-L-lysine.. It participates in protein modification; protein ubiquitination. Functionally, E3 ubiquitin-protein ligase which is a component of the N-end rule pathway. Recognizes and binds to proteins bearing specific N-terminal residues that are destabilizing according to the N-end rule, leading to their ubiquitination and subsequent degradation. The sequence is that of Putative E3 ubiquitin-protein ligase UBR7 (Ubr7) from Mus musculus (Mouse).